The following is a 724-amino-acid chain: Propionyl-CoA carboxylase alpha chain, mitochondrial (724 aa).

The transit peptide at methionine 1–serine 48 directs the protein to the mitochondrion. The Biotin carboxylation domain occupies threonine 58–proline 505. Lysine 61 is modified (N6-acetyllysine; alternate). Residue lysine 61 is modified to N6-succinyllysine; alternate. Lysine 115 carries the post-translational modification N6-succinyllysine. At lysine 146 the chain carries N6-acetyllysine; alternate. Residue lysine 146 is modified to N6-succinyllysine; alternate. Position 150 is an N6-acetyllysine (lysine 150). Lysine 173 provides a ligand contact to ATP. An ATP-grasp domain is found at lysine 177–lysine 374. N6-succinyllysine is present on lysine 184. Lysine 196 carries the N6-acetyllysine; alternate modification. Lysine 196 carries the post-translational modification N6-succinyllysine; alternate. ATP is bound by residues alanine 205–isoleucine 266, glutamate 257, and asparagine 292. Serine 248 carries the phosphoserine modification. Position 258 is an N6-succinyllysine (lysine 258). Lysine 324 is subject to N6-acetyllysine; alternate. Lysine 324 carries the post-translational modification N6-succinyllysine; alternate. Residues glutamate 332, glutamate 345, and asparagine 347 each contribute to the Mg(2+) site. The Mn(2+) site is built by glutamate 332, glutamate 345, and asparagine 347. Arginine 349 is an active-site residue. Residues lysine 381 and lysine 403 each carry the N6-succinyllysine modification. Phenylalanine 405 lines the biotin pocket. An N6-acetyllysine modification is found at lysine 492. An N6-succinyllysine mark is found at lysine 498, lysine 509, lysine 554, and lysine 644. Residues phenylalanine 645 to glutamate 724 form the Biotinyl-binding domain. At lysine 690 the chain carries N6-biotinyllysine; by HLCS.

In terms of assembly, the holoenzyme is a dodecamer composed of 6 PCCA/alpha subunits and 6 PCCB/beta subunits. Interacts (via the biotin carboxylation domain) with SIRT4. Interacts with SIRT3 and SIRT5. Requires Mg(2+) as cofactor. It depends on Mn(2+) as a cofactor. Biotin serves as cofactor. In terms of processing, acetylated. The biotin cofactor is covalently attached to the C-terminal biotinyl-binding domain and is required for the catalytic activity. Biotinylation is catalyzed by HLCS.

The protein resides in the mitochondrion matrix. The enzyme catalyses propanoyl-CoA + hydrogencarbonate + ATP = (S)-methylmalonyl-CoA + ADP + phosphate + H(+). It carries out the reaction butanoyl-CoA + hydrogencarbonate + ATP = (2S)-ethylmalonyl-CoA + ADP + phosphate + H(+). Its pathway is metabolic intermediate metabolism; propanoyl-CoA degradation; succinyl-CoA from propanoyl-CoA: step 1/3. In terms of biological role, this is one of the 2 subunits of the biotin-dependent propionyl-CoA carboxylase (PCC), a mitochondrial enzyme involved in the catabolism of odd chain fatty acids, branched-chain amino acids isoleucine, threonine, methionine, and valine and other metabolites. Propionyl-CoA carboxylase catalyzes the carboxylation of propionyl-CoA/propanoyl-CoA to D-methylmalonyl-CoA/(S)-methylmalonyl-CoA. Within the holoenzyme, the alpha subunit catalyzes the ATP-dependent carboxylation of the biotin carried by the biotin carboxyl carrier (BCC) domain, while the beta subunit then transfers the carboxyl group from carboxylated biotin to propionyl-CoA. Propionyl-CoA carboxylase also significantly acts on butyryl-CoA/butanoyl-CoA, which is converted to ethylmalonyl-CoA/(2S)-ethylmalonyl-CoA. Other alternative minor substrates include (2E)-butenoyl-CoA/crotonoyl-CoA. The protein is Propionyl-CoA carboxylase alpha chain, mitochondrial of Mus musculus (Mouse).